The chain runs to 588 residues: Adenine deaminase (588 aa).

The protein belongs to the metallo-dependent hydrolases superfamily. Adenine deaminase family. As to quaternary structure, homodimer. Requires Mn(2+) as cofactor.

It catalyses the reaction adenine + H2O + H(+) = hypoxanthine + NH4(+). The polypeptide is Adenine deaminase (Shigella sonnei (strain Ss046)).